The chain runs to 98 residues: Integration host factor subunit beta (98 aa).

This sequence belongs to the bacterial histone-like protein family. As to quaternary structure, heterodimer of an alpha and a beta chain.

In terms of biological role, this protein is one of the two subunits of integration host factor, a specific DNA-binding protein that functions in genetic recombination as well as in transcriptional and translational control. The sequence is that of Integration host factor subunit beta from Pseudomonas putida (strain W619).